Here is a 371-residue protein sequence, read N- to C-terminus: Chorismate synthase (371 aa).

Residues Arg48 and Arg54 each contribute to the NADP(+) site. FMN is bound by residues 131–133 (RSS), 245–246 (NA), Gly290, 305–309 (KPTSS), and Arg331.

The protein belongs to the chorismate synthase family. As to quaternary structure, homotetramer. FMNH2 is required as a cofactor.

It catalyses the reaction 5-O-(1-carboxyvinyl)-3-phosphoshikimate = chorismate + phosphate. Its pathway is metabolic intermediate biosynthesis; chorismate biosynthesis; chorismate from D-erythrose 4-phosphate and phosphoenolpyruvate: step 7/7. Its function is as follows. Catalyzes the anti-1,4-elimination of the C-3 phosphate and the C-6 proR hydrogen from 5-enolpyruvylshikimate-3-phosphate (EPSP) to yield chorismate, which is the branch point compound that serves as the starting substrate for the three terminal pathways of aromatic amino acid biosynthesis. This reaction introduces a second double bond into the aromatic ring system. The sequence is that of Chorismate synthase from Mesorhizobium japonicum (strain LMG 29417 / CECT 9101 / MAFF 303099) (Mesorhizobium loti (strain MAFF 303099)).